We begin with the raw amino-acid sequence, 461 residues long: Smoothelin-like protein 2 (461 aa).

Residues proline 55–serine 88 adopt a coiled-coil conformation. 2 disordered regions span residues alanine 87 to proline 193 and leucine 227 to serine 248. Residues proline 94 to glycine 107 show a composition bias toward pro residues. Threonine 96 is subject to Phosphothreonine. Residues serine 101, serine 129, and serine 134 each carry the phosphoserine modification. The span at serine 134–lysine 147 shows a compositional bias: basic and acidic residues. A phosphoserine mark is found at serine 256 and serine 269. The interval alanine 260–proline 307 is disordered. Residues leucine 272–proline 285 are compositionally biased toward pro residues. At threonine 274 the chain carries Phosphothreonine. Serine 278 is modified (phosphoserine). A compositionally biased stretch (basic and acidic residues) spans arginine 292 to valine 301. At serine 344 the chain carries Phosphoserine. The region spanning serine 351 to arginine 458 is the Calponin-homology (CH) domain.

This sequence belongs to the smoothelin family.

The chain is Smoothelin-like protein 2 (SMTNL2) from Homo sapiens (Human).